The sequence spans 265 residues: Acrosomal protein SP-10 (265 aa).

Residues 1-21 form the signal peptide; it reads MNRFLLLMSLYLLGSARGTSS. The tract at residues 62 to 181 is disordered; that stretch reads LNTLSEHGSS…EQASGAPISS (120 aa). 16 consecutive repeat copies span residues 66-70, 71-75, 85-88, 91-95, 110-114, 115-119, 120-123, 125-129, 135-139, 140-144, 145-148, 150-154, 155-159, 160-164, 165-168, and 170-174. The 3 X 5 AA repeats of S-E-H-[GA]-S stretch occupies residues 66 to 95; sequence SEHGSSEHGSSKHTVAEHTSGEHAESEHAS. A compositionally biased stretch (basic and acidic residues) spans 69 to 110; that stretch reads GSSEHGSSKHTVAEHTSGEHAESEHASGEPAATEHAEGEHTV. A 4 X 4 AA repeats of S-G-E-H region spans residues 85–168; the sequence is SGEHAESEHA…ASGEQPSGEH (84 aa). The 9 X 5 AA repeats of [SV]-G-E-Q-[PSA] stretch occupies residues 110-174; that stretch reads VGEQPSGEQP…SGEHASGEQA (65 aa). Polar residues predominate over residues 152–163; sequence EQPSGEQASGEQ. Asparagine 258 carries an N-linked (GlcNAc...) asparagine glycan.

Testis.

The protein localises to the cytoplasmic vesicle. The protein resides in the secretory vesicle. It localises to the acrosome. This chain is Acrosomal protein SP-10 (ACRV1), found in Homo sapiens (Human).